A 426-amino-acid chain; its full sequence is MTEIVDIIAREILDSRGNPTVEVDVVLEDGAFGRAAVPSGASTGAHEAVEKRDGDKSRYGGKGVKSAVDAVNGELFDALSGVDAEDQRRIDNLMIALDGTPNKSRLGANAILGVSLAVAKAAAESAGLPLYKYVGGVSARVLPVPMMNIINGGAHADNPIDIQEFMILPTGSPTFAEALRMGAEIFHGLKKALKDAGHNTNVGDEGGFAPNLGSAEDALAFIVKAGEAAGYKSGEDFVLGLDVAATEFFKNGKYELEGEGKSLDPAQMVDYLAGLADKFPILSIEDGMSEDDFDGWKLLTDKLGKKVQLVGDDLFVTNPKRLQIGLDKGLANSILIKVNQIGTLSETIDAVDMAHRAAYTSVMSHRSGETEDSTIADLAVALNCGQIKTGSLARSDRLAKYNQLLRIEEALDDQAVYAGRAVLKGR.

The disordered stretch occupies residues 38-60 (PSGASTGAHEAVEKRDGDKSRYG). The span at 47-58 (EAVEKRDGDKSR) shows a compositional bias: basic and acidic residues. Q163 serves as a coordination point for (2R)-2-phosphoglycerate. The Proton donor role is filled by E205. Residues D242, E285, and D312 each coordinate Mg(2+). The (2R)-2-phosphoglycerate site is built by K337, R366, S367, and K388. Catalysis depends on K337, which acts as the Proton acceptor.

It belongs to the enolase family. Mg(2+) is required as a cofactor.

It localises to the cytoplasm. The protein resides in the secreted. Its subcellular location is the cell surface. It catalyses the reaction (2R)-2-phosphoglycerate = phosphoenolpyruvate + H2O. The protein operates within carbohydrate degradation; glycolysis; pyruvate from D-glyceraldehyde 3-phosphate: step 4/5. Catalyzes the reversible conversion of 2-phosphoglycerate (2-PG) into phosphoenolpyruvate (PEP). It is essential for the degradation of carbohydrates via glycolysis. The polypeptide is Enolase (Caulobacter sp. (strain K31)).